We begin with the raw amino-acid sequence, 25 residues long: Caerin-1.9 (25 aa).

L25 carries the leucine amide modification.

It belongs to the frog skin active peptide (FSAP) family. Caerin subfamily. In terms of tissue distribution, expressed by the skin dorsal glands.

Its subcellular location is the secreted. Its function is as follows. Antimicrobial peptide. Adopts an alpha helical conformation which can disrupt bacterial membranes. Strongly inhibits the formation of NO by neuronal nitric oxide synthase (nNOS) at micromolar concentrations. Acts by a non-competitive mechanism, probably by binding to calcium/calmodulin and as a consequence blocking calmodulin attachment to nNOS. This Ranoidea chloris (Red-eyed tree frog) protein is Caerin-1.9.